The following is a 484-amino-acid chain: Aspartyl/glutamyl-tRNA(Asn/Gln) amidotransferase subunit B (484 aa).

This sequence belongs to the GatB/GatE family. GatB subfamily. Heterotrimer of A, B and C subunits.

It catalyses the reaction L-glutamyl-tRNA(Gln) + L-glutamine + ATP + H2O = L-glutaminyl-tRNA(Gln) + L-glutamate + ADP + phosphate + H(+). The catalysed reaction is L-aspartyl-tRNA(Asn) + L-glutamine + ATP + H2O = L-asparaginyl-tRNA(Asn) + L-glutamate + ADP + phosphate + 2 H(+). Its function is as follows. Allows the formation of correctly charged Asn-tRNA(Asn) or Gln-tRNA(Gln) through the transamidation of misacylated Asp-tRNA(Asn) or Glu-tRNA(Gln) in organisms which lack either or both of asparaginyl-tRNA or glutaminyl-tRNA synthetases. The reaction takes place in the presence of glutamine and ATP through an activated phospho-Asp-tRNA(Asn) or phospho-Glu-tRNA(Gln). The chain is Aspartyl/glutamyl-tRNA(Asn/Gln) amidotransferase subunit B from Anaeromyxobacter dehalogenans (strain 2CP-1 / ATCC BAA-258).